Reading from the N-terminus, the 91-residue chain is Probable Fe(2+)-trafficking protein (91 aa).

Belongs to the Fe(2+)-trafficking protein family. Monomer.

Could be a mediator in iron transactions between iron acquisition and iron-requiring processes, such as synthesis and/or repair of Fe-S clusters in biosynthetic enzymes. In Cronobacter sakazakii (strain ATCC BAA-894) (Enterobacter sakazakii), this protein is Probable Fe(2+)-trafficking protein.